Here is a 357-residue protein sequence, read N- to C-terminus: 4-hydroxyphenylpyruvate dioxygenase (357 aa).

VOC domains follow at residues Gly17–Arg137 and Tyr165–Asp316. Residues His168, His246, and Glu325 each coordinate Fe cation.

Belongs to the 4HPPD family. In terms of assembly, homotetramer. It depends on Fe cation as a cofactor.

The enzyme catalyses 3-(4-hydroxyphenyl)pyruvate + O2 = homogentisate + CO2. It participates in amino-acid degradation; L-phenylalanine degradation; acetoacetate and fumarate from L-phenylalanine: step 3/6. The polypeptide is 4-hydroxyphenylpyruvate dioxygenase (hpd) (Pseudomonas aeruginosa (strain ATCC 15692 / DSM 22644 / CIP 104116 / JCM 14847 / LMG 12228 / 1C / PRS 101 / PAO1)).